The following is a 264-amino-acid chain: Hydroxyethylthiazole kinase (264 aa).

Position 40 (Met40) interacts with substrate. 2 residues coordinate ATP: Lys116 and Thr161. Gly188 contributes to the substrate binding site.

This sequence belongs to the Thz kinase family. Mg(2+) is required as a cofactor.

The enzyme catalyses 5-(2-hydroxyethyl)-4-methylthiazole + ATP = 4-methyl-5-(2-phosphooxyethyl)-thiazole + ADP + H(+). The protein operates within cofactor biosynthesis; thiamine diphosphate biosynthesis; 4-methyl-5-(2-phosphoethyl)-thiazole from 5-(2-hydroxyethyl)-4-methylthiazole: step 1/1. In terms of biological role, catalyzes the phosphorylation of the hydroxyl group of 4-methyl-5-beta-hydroxyethylthiazole (THZ). In Staphylococcus carnosus (strain TM300), this protein is Hydroxyethylthiazole kinase.